Here is a 382-residue protein sequence, read N- to C-terminus: Kelch domain-containing protein 3 (382 aa).

Kelch repeat units lie at residues 25-77 (RVYS…PYMR), 88-138 (TVFL…VLGK), 139-189 (IMYI…TMLG), 191-249 (HMYV…GYNG), and 251-301 (LYIF…IVGD).

As to quaternary structure, component of a CRL2(KLHDC3) complex, also named ECS(KLHDC3) complex, composed of CUL2, Elongin BC (ELOB and ELOC), RBX1 and substrate-specific adapter KLHDC3. May form oligomers as a KLHDC3-ELOB-ELOC complex; this interaction is likely autoinhibitory for the E3 ligase complex. As to expression, expressed specifically in testis, particularly in pachytene spermatocytes.

The protein resides in the cytoplasm. Its pathway is protein modification; protein ubiquitination. In terms of biological role, substrate-recognition component of a Cul2-RING (CRL2) E3 ubiquitin-protein ligase complex of the DesCEND (destruction via C-end degrons) pathway, which recognizes a C-degron located at the extreme C terminus of target proteins, leading to their ubiquitination and degradation. The C-degron recognized by the DesCEND pathway is usually a motif of less than ten residues and can be present in full-length proteins, truncated proteins or proteolytically cleaved forms. The CRL2(KLHDC3) complex specifically recognizes proteins with a glycine (Gly) at the C-terminus, leading to their ubiquitination and degradation: recognizes the C-terminal -Arg-(Xaa)n-Arg-Gly, -Arg-(Xaa)n-Lys-Gly, and -Arg-(Xaa)n-Gln-Gly degrons. The CRL2(KLHDC3) complex mediates ubiquitination and degradation of truncated SELENOV and SEPHS2 selenoproteins produced by failed UGA/Sec decoding, which end with a glycine. May be involved in meiotic recombination process. The protein is Kelch domain-containing protein 3 of Mus musculus (Mouse).